The following is a 351-amino-acid chain: Signal recognition particle receptor FtsY (351 aa).

GTP-binding positions include 152 to 159 (GVNGSGKT), 235 to 239 (DTAGR), and 299 to 302 (TKMD).

This sequence belongs to the GTP-binding SRP family. FtsY subfamily. As to quaternary structure, part of the signal recognition particle protein translocation system, which is composed of SRP and FtsY.

The protein localises to the cell membrane. It localises to the cytoplasm. The catalysed reaction is GTP + H2O = GDP + phosphate + H(+). Functionally, involved in targeting and insertion of nascent membrane proteins into the cytoplasmic membrane. Acts as a receptor for the complex formed by the signal recognition particle (SRP) and the ribosome-nascent chain (RNC). The sequence is that of Signal recognition particle receptor FtsY from Metamycoplasma hominis (strain ATCC 23114 / DSM 25592 / NBRC 14850 / NCTC 10111 / PG21) (Mycoplasma hominis).